The following is a 177-amino-acid chain: Late embryogenesis abundant protein 1 (177 aa).

The interval 1-177 (MASHDQSYKA…DKDHFPTNRH (177 aa)) is disordered. A compositionally biased stretch (basic and acidic residues) spans 28–39 (IEDKAQAAKEKA). Low complexity predominate over residues 40 to 89 (QQAAQTAKDKTSQTAQAAKEKTQQTAQAAKEKTQQTAQAAKDETQQTAQA). A run of 4 repeats spans residues 53 to 63 (TAQAAKEKTQQ), 64 to 74 (TAQAAKEKTQQ), 75 to 85 (TAQAAKDETQQ), and 86 to 96 (TAQAAKDKTQQ). The tract at residues 53-96 (TAQAAKEKTQQTAQAAKEKTQQTAQAAKDETQQTAQAAKDKTQQ) is 4 X 11 AA approximate tandem repeats of T-A-Q-A-A-K-E-K-T-Q-Q. The segment covering 90 to 117 (AKDKTQQTTEATKEKAQDTTGRAREKGS) has biased composition (basic and acidic residues). The segment covering 119-142 (MGQSTKETAQSGKDNSAGFLQQTG) has biased composition (polar residues). The span at 164-177 (NDDKDKDHFPTNRH) shows a compositional bias: basic and acidic residues.

It belongs to the LEA type 4 family. Highest expression is found in seeds. No expression detected in adult tissues.

The sequence is that of Late embryogenesis abundant protein 1 from Cicer arietinum (Chickpea).